Reading from the N-terminus, the 310-residue chain is Olfactory receptor 10N1 (310 aa).

The Extracellular portion of the chain corresponds to 1-23 (MDNYTLLNEFILLGIPQTQGLET). The N-linked (GlcNAc...) asparagine glycan is linked to asparagine 3. A helical membrane pass occupies residues 24-44 (LLFVVFLFIYFFTLLGNSLIF). Residues 45–55 (TAIISSSTLHT) are Cytoplasmic-facing. Residues 56-76 (PMYFFLGLLSVFDMLFPSVTC) traverse the membrane as a helical segment. At 77–95 (PKMLFYLSVRSPAISYKGC) the chain is on the extracellular side. Cysteine 95 and cysteine 187 are oxidised to a cystine. The helical transmembrane segment at 96-116 (AAQLFFYHLLGSTEGCLYSVM) threads the bilayer. At 117 to 136 (AYDRYVAICHPLRYMLIMKP) the chain is on the cytoplasmic side. The chain crosses the membrane as a helical span at residues 137–157 (GVCVSLVIIAWLVGCLHATIL). At 158–202 (TSLTFQLVYCASNQVDYFFCDLPAVLPLACTDSKLARKVGSINVG) the chain is on the extracellular side. The chain crosses the membrane as a helical span at residues 203 to 223 (FLALMLLFSVCVSYVHIGVAI). Residues 224-237 (LRIRSAEGRQKAFS) lie on the Cytoplasmic side of the membrane. Residues 238–258 (TCSAHLTAILCAYGPVIIIYL) traverse the membrane as a helical segment. The Extracellular portion of the chain corresponds to 259 to 264 (QRTPNP). The chain crosses the membrane as a helical span at residues 265 to 285 (LLGAVVQILNNIVSPMLNSLI). Topologically, residues 286–310 (YSLRNKEVKRSLRRVFQNITFHGQK) are cytoplasmic.

It belongs to the G-protein coupled receptor 1 family.

The protein localises to the cell membrane. In terms of biological role, odorant receptor. This Mus musculus (Mouse) protein is Olfactory receptor 10N1.